We begin with the raw amino-acid sequence, 423 residues long: GPI mannosyltransferase 2 (423 aa).

9 helical membrane-spanning segments follow: residues 11 to 31 (ILSL…IALG), 106 to 126 (WEAL…VLAL), 139 to 159 (LAYL…ISAP), 160 to 180 (YAES…AISL), 197 to 219 (GLSY…LFAV), 240 to 260 (LVAP…PQVL), 299 to 319 (YWTP…TILL), 351 to 371 (LAAI…VQII), and 400 to 420 (GVIV…ASFL).

Belongs to the PIGV family.

The protein resides in the endoplasmic reticulum membrane. It participates in glycolipid biosynthesis; glycosylphosphatidylinositol-anchor biosynthesis. Mannosyltransferase involved in glycosylphosphatidylinositol-anchor biosynthesis. Transfers the second mannose to the glycosylphosphatidylinositol during GPI precursor assembly. The chain is GPI mannosyltransferase 2 (GPI18) from Gibberella zeae (strain ATCC MYA-4620 / CBS 123657 / FGSC 9075 / NRRL 31084 / PH-1) (Wheat head blight fungus).